The sequence spans 645 residues: Mediator of RNA polymerase II transcription subunit 17 (645 aa).

Belongs to the Mediator complex subunit 17 family. Component of the Mediator complex.

Its subcellular location is the nucleus. Component of the Mediator complex, a coactivator involved in the regulated transcription of nearly all RNA polymerase II-dependent genes. Mediator functions as a bridge to convey information from gene-specific regulatory proteins to the basal RNA polymerase II transcription machinery. Mediator is recruited to promoters by direct interactions with regulatory proteins and serves as a scaffold for the assembly of a functional preinitiation complex with RNA polymerase II and the general transcription factors. In Aedes aegypti (Yellowfever mosquito), this protein is Mediator of RNA polymerase II transcription subunit 17 (MED17).